Consider the following 1228-residue polypeptide: Myosin-1 (1228 aa).

Residues 1 to 27 (MAVTKRAGRRAQGGTQPAKGAQGVKKA) form a disordered region. One can recognise a Myosin motor domain in the interval 37 to 716 (VGVSDLTLLS…TLFALEHMRD (680 aa)). 130-137 (GESGAGKT) is an ATP binding site. Phosphoserine is present on S358. Residues 405–487 (TIGILDIYGF…PGIFAALNDA (83 aa)) are actin-binding. IQ domains follow at residues 720 to 740 (HNMA…KTEC) and 741 to 768 (AIKI…SGHK). One can recognise a TH1 domain in the interval 776 to 962 (RRTYSLIGYR…SGSVQVPPGA (187 aa)). Disordered regions lie at residues 953–1040 (SGSV…AESA), 1053–1109 (QSLV…PAAP), and 1169–1228 (QGGA…DDDW). The span at 1053-1063 (QSLVNPRSGQG) shows a compositional bias: polar residues. The span at 1064–1092 (QQQQQHHQAYQQPTAAQPAATSYSPAPAK) shows a compositional bias: low complexity. Residues 1093-1106 (AAPPPPPPAPPAAP) are compositionally biased toward pro residues. Residues 1109–1170 (PAEPTYKALY…PAAYLEEVQG (62 aa)) form the SH3 domain. Residues 1180–1194 (PTAGGASAGASLAEA) show a composition bias toward low complexity.

The protein belongs to the TRAFAC class myosin-kinesin ATPase superfamily. Myosin family. Phosphorylation of the TEDS site (Ser-358) is required for the polarization of the actin cytoskeleton. Phosphorylation probably activates the myosin-I ATPase activity.

It is found in the cytoplasm. Its subcellular location is the cytoskeleton. The protein localises to the actin patch. Type-I myosin implicated in the organization of the actin cytoskeleton. Required for proper actin cytoskeleton polarization. At the cell cortex, assembles in patch-like structures together with proteins from the actin-polymerizing machinery and promotes actin assembly. Functions as actin nucleation-promoting factor (NPF) for the Arp2/3 complex. The sequence is that of Myosin-1 (MYO1) from Yarrowia lipolytica (strain CLIB 122 / E 150) (Yeast).